A 398-amino-acid chain; its full sequence is Lysophosphatidylserine lipase ABHD12 (398 aa).

Residues Met-1–Cys-15 show a composition bias toward basic and acidic residues. The interval Met-1–Gly-24 is disordered. Residues Met-1 to Lys-74 are Cytoplasmic-facing. A helical membrane pass occupies residues Ile-75 to Gly-95. The Extracellular segment spans residues Ile-96 to His-398. Asn-123 carries an N-linked (GlcNAc...) asparagine glycan. The active-site Nucleophile is the Ser-246. Catalysis depends on charge relay system residues Asp-333 and His-372.

Belongs to the serine esterase family.

Its subcellular location is the endoplasmic reticulum membrane. It carries out the reaction 1-(9Z-octadecenoyl)-sn-glycero-3-phospho-L-serine + H2O = sn-glycero-3-phospho-L-serine + (9Z)-octadecenoate + H(+). It catalyses the reaction 1-(9Z-octadecenoyl)-sn-glycero-3-phospho-(1'-sn-glycerol) + H2O = sn-glycero-3-phospho-(1'-sn-glycerol) + (9Z)-octadecenoate + H(+). The enzyme catalyses 1-(9Z-octadecenoyl)-sn-glycero-3-phospho-(1D-myo-inositol) + H2O = sn-glycero-3-phospho-1D-myo-inositol + (9Z)-octadecenoate + H(+). The catalysed reaction is 1-(9Z-octadecenoyl)-sn-glycero-3-phosphoethanolamine + H2O = sn-glycero-3-phosphoethanolamine + (9Z)-octadecenoate + H(+). It carries out the reaction 1-(9Z-octadecenoyl)-sn-glycero-3-phosphocholine + H2O = 1-(9Z-octadecenoyl)-sn-glycerol + phosphocholine + H(+). It catalyses the reaction 2-(9Z-octadecenoyl)-glycerol + H2O = glycerol + (9Z)-octadecenoate + H(+). The enzyme catalyses 1-hexadecanoyl-sn-glycero-3-phospho-L-serine + H2O = sn-glycero-3-phospho-L-serine + hexadecanoate + H(+). The catalysed reaction is 2-(5Z,8Z,11Z,14Z-eicosatetraenoyl)-glycerol + H2O = glycerol + (5Z,8Z,11Z,14Z)-eicosatetraenoate + H(+). It carries out the reaction Hydrolyzes glycerol monoesters of long-chain fatty acids.. It catalyses the reaction 1-decanoylglycerol + H2O = decanoate + glycerol + H(+). The enzyme catalyses 1-dodecanoylglycerol + H2O = dodecanoate + glycerol + H(+). The catalysed reaction is 1-tetradecanoylglycerol + H2O = tetradecanoate + glycerol + H(+). It carries out the reaction 2-hexadecanoylglycerol + H2O = glycerol + hexadecanoate + H(+). It catalyses the reaction 1-(9Z-octadecenoyl)-glycerol + H2O = glycerol + (9Z)-octadecenoate + H(+). The enzyme catalyses 2-(9Z,12Z-octadecadienoyl)-glycerol + H2O = (9Z,12Z)-octadecadienoate + glycerol + H(+). The catalysed reaction is 1-(5Z,8Z,11Z,14Z-eicosatetraenoyl)-glycerol + H2O = glycerol + (5Z,8Z,11Z,14Z)-eicosatetraenoate + H(+). It carries out the reaction 1-(9Z,12Z-octadecadienoyl)-glycerol + H2O = (9Z,12Z)-octadecadienoate + glycerol + H(+). It catalyses the reaction 1-hexadecanoylglycerol + H2O = glycerol + hexadecanoate + H(+). The enzyme catalyses 1-octadecanoylglycerol + H2O = octadecanoate + glycerol + H(+). The catalysed reaction is 1-octadecanoyl-2-(9,10-epoxyoctadecanoyl)-sn-glycero-3-phospho-L-serine + H2O = 9,10-epoxyoctadecanoate + 1-octadecanoyl-sn-glycero-3-phosphoserine + H(+). It carries out the reaction 1-octadecanoyl-2-(10-hydroxyoctadecanoyl)-sn-glycero-3-phospho-L-serine + H2O = 1-octadecanoyl-sn-glycero-3-phosphoserine + 10-hydroxyoctadecanoate + H(+). It catalyses the reaction 1-hexadecanoyl-2-(10-hydroxyoctadecanoyl)-sn-glycero-3-phospho-L-serine + H2O = 10-hydroxyoctadecanoate + 1-hexadecanoyl-sn-glycero-3-phospho-L-serine + H(+). In terms of biological role, lysophosphatidylserine (LPS) lipase that mediates the hydrolysis of lysophosphatidylserine, a class of signaling lipids that regulates immunological and neurological processes. Represents a major lysophosphatidylserine lipase in the brain, thereby playing a key role in the central nervous system. Also able to hydrolyze oxidized phosphatidylserine; oxidized phosphatidylserine is produced in response to severe inflammatory stress and constitutes a proapoptotic 'eat me' signal. Also has monoacylglycerol (MAG) lipase activity: hydrolyzes 2-arachidonoylglycerol (2-AG), thereby acting as a regulator of endocannabinoid signaling pathways. Has a strong preference for very-long-chain lipid substrates; substrate specificity is likely due to improved catalysis and not improved substrate binding. The sequence is that of Lysophosphatidylserine lipase ABHD12 from Rattus norvegicus (Rat).